Consider the following 87-residue polypeptide: UPF0335 protein RL4065 (87 aa).

Belongs to the UPF0335 family.

The polypeptide is UPF0335 protein RL4065 (Rhizobium johnstonii (strain DSM 114642 / LMG 32736 / 3841) (Rhizobium leguminosarum bv. viciae)).